An 80-amino-acid polypeptide reads, in one-letter code: Late expression factor 10 (80 aa).

The protein belongs to the baculoviridae LEF-10 family.

Functionally, involved in late/very late gene activation. The sequence is that of Late expression factor 10 (LEF-10) from Orgyia pseudotsugata multicapsid polyhedrosis virus (OpMNPV).